Here is a 300-residue protein sequence, read N- to C-terminus: Acetylglutamate kinase (300 aa).

Substrate is bound by residues 68–69 (GG), Arg-90, and Asn-195.

It belongs to the acetylglutamate kinase family. ArgB subfamily.

It is found in the cytoplasm. It catalyses the reaction N-acetyl-L-glutamate + ATP = N-acetyl-L-glutamyl 5-phosphate + ADP. Its pathway is amino-acid biosynthesis; L-arginine biosynthesis; N(2)-acetyl-L-ornithine from L-glutamate: step 2/4. Catalyzes the ATP-dependent phosphorylation of N-acetyl-L-glutamate. The chain is Acetylglutamate kinase from Azotobacter vinelandii (strain DJ / ATCC BAA-1303).